We begin with the raw amino-acid sequence, 317 residues long: Ribonuclease Z (317 aa).

Positions 62, 64, 66, 67, 139, 210, and 268 each coordinate Zn(2+). Catalysis depends on D66, which acts as the Proton acceptor.

Belongs to the RNase Z family. As to quaternary structure, homodimer. Requires Zn(2+) as cofactor.

The enzyme catalyses Endonucleolytic cleavage of RNA, removing extra 3' nucleotides from tRNA precursor, generating 3' termini of tRNAs. A 3'-hydroxy group is left at the tRNA terminus and a 5'-phosphoryl group is left at the trailer molecule.. Functionally, zinc phosphodiesterase, which displays some tRNA 3'-processing endonuclease activity. Probably involved in tRNA maturation, by removing a 3'-trailer from precursor tRNA. The protein is Ribonuclease Z of Picosynechococcus sp. (strain ATCC 27264 / PCC 7002 / PR-6) (Agmenellum quadruplicatum).